The following is an 85-amino-acid chain: Large ribosomal subunit protein bL31B (85 aa).

Belongs to the bacterial ribosomal protein bL31 family. Type B subfamily. In terms of assembly, part of the 50S ribosomal subunit.

This is Large ribosomal subunit protein bL31B from Bifidobacterium longum subsp. infantis (strain ATCC 15697 / DSM 20088 / JCM 1222 / NCTC 11817 / S12).